The primary structure comprises 226 residues: UPF0758 protein SGO_1229 (226 aa).

The MPN domain maps to 103-225 (RILSSQKLAK…YYSYREETDL (123 aa)). Zn(2+)-binding residues include histidine 174, histidine 176, and aspartate 187. The short motif at 174-187 (HNHPSGATRPSRDD) is the JAMM motif element.

This sequence belongs to the UPF0758 family.

The polypeptide is UPF0758 protein SGO_1229 (Streptococcus gordonii (strain Challis / ATCC 35105 / BCRC 15272 / CH1 / DL1 / V288)).